The following is a 144-amino-acid chain: uncharacterized protein (144 aa).

A run of 2 helical transmembrane segments spans residues 76–96 and 105–125; these read LLSA…VTML and ILRA…VKSY.

This sequence belongs to the RseC family.

The protein resides in the cell inner membrane. This is an uncharacterized protein from Haemophilus influenzae (strain ATCC 51907 / DSM 11121 / KW20 / Rd).